Reading from the N-terminus, the 279-residue chain is HTH-type transcriptional activator RhaS (279 aa).

Residues 175–273 form the HTH araC/xylS-type domain; that stretch reads QALLGWLQNN…SQAPKSLRHQ (99 aa). 2 consecutive DNA-binding regions (H-T-H motif) follow at residues 192–213 and 240–263; these read GGLADQFSLPLRTLHRQLKQHT and ITTIAHACGFSDSNHFSTQFRKAF.

As to quaternary structure, binds DNA as a dimer.

It localises to the cytoplasm. In terms of biological role, activates expression of the rhaBAD and rhaT operons. The sequence is that of HTH-type transcriptional activator RhaS from Pectobacterium atrosepticum (strain SCRI 1043 / ATCC BAA-672) (Erwinia carotovora subsp. atroseptica).